A 292-amino-acid polypeptide reads, in one-letter code: Inhibitory synaptic factor 1 (292 aa).

Residues 1–25 (MNIRGAPDLGQPSDDPNSGGERERI) form a disordered region. A coiled-coil region spans residues 30-63 (KMVIGQLEGILRELKEVAKELREVVSQIDKLTSD). Positions 120–292 (TPSDSVDGPE…ATKQKAKGKN (173 aa)) are disordered. Residues 180-192 (GTRERVRFSDKVL) are compositionally biased toward basic and acidic residues. Residues 198–216 (CDDEEGDGEEGEEEEEGDL) show a composition bias toward acidic residues. Polar residues predominate over residues 263-285 (RNSSTQTVSDKSTQTVLPYTATK).

Belongs to the INSYN1 family. As to quaternary structure, interacts with GPHN.

It is found in the postsynaptic density. Functionally, component of the protein machinery at the inhibitory synapses, probably acting as a scaffold. Inhibitory synapses dampen neuronal activity through postsynaptic hyperpolarization. This synaptic inhibition is fundamental for the functioning of the central nervous system, shaping and orchestrating the flow of information through neuronal networks to generate a precise neural code. The sequence is that of Inhibitory synaptic factor 1 (Insyn1) from Mus musculus (Mouse).